The chain runs to 147 residues: D-aminoacyl-tRNA deacylase (147 aa).

A Gly-cisPro motif, important for rejection of L-amino acids motif is present at residues 139–140; that stretch reads GP.

The protein belongs to the DTD family. In terms of assembly, homodimer.

It is found in the cytoplasm. It catalyses the reaction glycyl-tRNA(Ala) + H2O = tRNA(Ala) + glycine + H(+). It carries out the reaction a D-aminoacyl-tRNA + H2O = a tRNA + a D-alpha-amino acid + H(+). Its function is as follows. An aminoacyl-tRNA editing enzyme that deacylates mischarged D-aminoacyl-tRNAs. Also deacylates mischarged glycyl-tRNA(Ala), protecting cells against glycine mischarging by AlaRS. Acts via tRNA-based rather than protein-based catalysis; rejects L-amino acids rather than detecting D-amino acids in the active site. By recycling D-aminoacyl-tRNA to D-amino acids and free tRNA molecules, this enzyme counteracts the toxicity associated with the formation of D-aminoacyl-tRNA entities in vivo and helps enforce protein L-homochirality. This Rippkaea orientalis (strain PCC 8801 / RF-1) (Cyanothece sp. (strain PCC 8801)) protein is D-aminoacyl-tRNA deacylase.